Consider the following 210-residue polypeptide: MVCGGFACSKNALCALNVVYMLVGLLLIGVAAWAKGLGLVSSIHIIGGVIAVGVFLLLIAVAGLVGAVNHHQVLLFFYMIILGLVFIFQFGISCSCLAINLSKQTDVINASWWVMSNKTRDELERSFDCCGLFNLTTLDQQDYAFCTAVCKSRSPTCQMCGEKFLKHSDEALKILGGVGLFFSFTEILGVWLAMRFRNQKDPRANPSAFL.

At 1-12 (MVCGGFACSKNA) the chain is on the cytoplasmic side. The helical transmembrane segment at 13–33 (LCALNVVYMLVGLLLIGVAAW) threads the bilayer. The Extracellular portion of the chain corresponds to 34–44 (AKGLGLVSSIH). The chain crosses the membrane as a helical span at residues 45 to 65 (IIGGVIAVGVFLLLIAVAGLV). The Cytoplasmic segment spans residues 66–72 (GAVNHHQ). Residues 73-93 (VLLFFYMIILGLVFIFQFGIS) form a helical membrane-spanning segment. Over 94–173 (CSCLAINLSK…FLKHSDEALK (80 aa)) the chain is Extracellular. N-linked (GlcNAc...) asparagine glycans are attached at residues Asn100, Asn109, Asn117, and Asn134. Residues 174-194 (ILGGVGLFFSFTEILGVWLAM) traverse the membrane as a helical segment. Residues 195 to 210 (RFRNQKDPRANPSAFL) lie on the Cytoplasmic side of the membrane.

The protein belongs to the tetraspanin (TM4SF) family.

The protein localises to the membrane. This Bos taurus (Bovine) protein is Tetraspanin-31 (TSPAN31).